The following is a 227-amino-acid chain: Phosphoglycolate phosphatase (227 aa).

The Nucleophile role is filled by Asp11. Asp11, Asp13, and Asp176 together coordinate Mg(2+).

This sequence belongs to the HAD-like hydrolase superfamily. CbbY/CbbZ/Gph/YieH family. Mg(2+) is required as a cofactor.

It carries out the reaction 2-phosphoglycolate + H2O = glycolate + phosphate. Its pathway is organic acid metabolism; glycolate biosynthesis; glycolate from 2-phosphoglycolate: step 1/1. Specifically catalyzes the dephosphorylation of 2-phosphoglycolate. Is involved in the dissimilation of the intracellular 2-phosphoglycolate formed during the DNA repair of 3'-phosphoglycolate ends, a major class of DNA lesions induced by oxidative stress. This is Phosphoglycolate phosphatase from Aliivibrio fischeri (strain ATCC 700601 / ES114) (Vibrio fischeri).